The following is a 124-amino-acid chain: Small ribosomal subunit protein uS11 (124 aa).

The interval 102-124 (RIGRIEDATPIPHDGTTPKRKNR) is disordered.

It belongs to the universal ribosomal protein uS11 family. Part of the 30S ribosomal subunit.

Its function is as follows. Located on the platform of the 30S subunit. This is Small ribosomal subunit protein uS11 from Methanococcus maripaludis (strain C5 / ATCC BAA-1333).